The following is a 776-amino-acid chain: DNA topoisomerase 1 (776 aa).

A Toprim domain is found at 1 to 111; the sequence is MKLVIVESPA…VKSDDFFKRV (111 aa). Mg(2+) is bound by residues Glu7 and Asp80. A Topo IA-type catalytic domain is found at 132-568; that stretch reads DANLVNAQQA…FWSGFNHNIE (437 aa). Residues 166-171 form an interaction with DNA region; sequence SAGRVQ. The O-(5'-phospho-DNA)-tyrosine intermediate role is filled by Tyr304. The segment at 600–627 adopts a C4-type zinc-finger fold; it reads CPSCKTGELSLKLGKFGAFLACSNYPEC.

Belongs to the type IA topoisomerase family. As to quaternary structure, monomer. Mg(2+) serves as cofactor.

The catalysed reaction is ATP-independent breakage of single-stranded DNA, followed by passage and rejoining.. Releases the supercoiling and torsional tension of DNA, which is introduced during the DNA replication and transcription, by transiently cleaving and rejoining one strand of the DNA duplex. Introduces a single-strand break via transesterification at a target site in duplex DNA. The scissile phosphodiester is attacked by the catalytic tyrosine of the enzyme, resulting in the formation of a DNA-(5'-phosphotyrosyl)-enzyme intermediate and the expulsion of a 3'-OH DNA strand. The free DNA strand then undergoes passage around the unbroken strand, thus removing DNA supercoils. Finally, in the religation step, the DNA 3'-OH attacks the covalent intermediate to expel the active-site tyrosine and restore the DNA phosphodiester backbone. In Rickettsia felis (strain ATCC VR-1525 / URRWXCal2) (Rickettsia azadi), this protein is DNA topoisomerase 1.